The chain runs to 350 residues: Protein-glutamate methylesterase/protein-glutamine glutaminase (350 aa).

One can recognise a Response regulatory domain in the interval 5 to 122; sequence KVLCVDDSAL…RDGLIEYSEV (118 aa). At D56 the chain carries 4-aspartylphosphate. The region spanning 152 to 346 is the CheB-type methylesterase domain; it reads PFASSEKLVI…ERILTRLGDR (195 aa). Active-site residues include S165, H191, and D288.

It belongs to the CheB family. Post-translationally, phosphorylated by CheA. Phosphorylation of the N-terminal regulatory domain activates the methylesterase activity.

The protein resides in the cytoplasm. It carries out the reaction [protein]-L-glutamate 5-O-methyl ester + H2O = L-glutamyl-[protein] + methanol + H(+). The enzyme catalyses L-glutaminyl-[protein] + H2O = L-glutamyl-[protein] + NH4(+). Involved in chemotaxis. Part of a chemotaxis signal transduction system that modulates chemotaxis in response to various stimuli. Catalyzes the demethylation of specific methylglutamate residues introduced into the chemoreceptors (methyl-accepting chemotaxis proteins or MCP) by CheR. Also mediates the irreversible deamidation of specific glutamine residues to glutamic acid. This chain is Protein-glutamate methylesterase/protein-glutamine glutaminase, found in Bordetella bronchiseptica (strain ATCC BAA-588 / NCTC 13252 / RB50) (Alcaligenes bronchisepticus).